A 420-amino-acid chain; its full sequence is Phosphoribosylamine--glycine ligase (420 aa).

The 207-residue stretch at Lys108 to Asp314 folds into the ATP-grasp domain. Ile134–Ser195 provides a ligand contact to ATP. Mg(2+)-binding residues include Glu284 and Asn286.

Belongs to the GARS family. Mg(2+) is required as a cofactor. It depends on Mn(2+) as a cofactor.

It catalyses the reaction 5-phospho-beta-D-ribosylamine + glycine + ATP = N(1)-(5-phospho-beta-D-ribosyl)glycinamide + ADP + phosphate + H(+). Its pathway is purine metabolism; IMP biosynthesis via de novo pathway; N(1)-(5-phospho-D-ribosyl)glycinamide from 5-phospho-alpha-D-ribose 1-diphosphate: step 2/2. In Streptococcus pneumoniae (strain ATCC BAA-255 / R6), this protein is Phosphoribosylamine--glycine ligase.